Here is a 195-residue protein sequence, read N- to C-terminus: ATP-dependent Clp protease proteolytic subunit (195 aa).

The active-site Nucleophile is the S99. The active site involves H124.

Belongs to the peptidase S14 family. As to quaternary structure, fourteen ClpP subunits assemble into 2 heptameric rings which stack back to back to give a disk-like structure with a central cavity, resembling the structure of eukaryotic proteasomes.

It is found in the cytoplasm. The enzyme catalyses Hydrolysis of proteins to small peptides in the presence of ATP and magnesium. alpha-casein is the usual test substrate. In the absence of ATP, only oligopeptides shorter than five residues are hydrolyzed (such as succinyl-Leu-Tyr-|-NHMec, and Leu-Tyr-Leu-|-Tyr-Trp, in which cleavage of the -Tyr-|-Leu- and -Tyr-|-Trp bonds also occurs).. Its function is as follows. Cleaves peptides in various proteins in a process that requires ATP hydrolysis. Has a chymotrypsin-like activity. Plays a major role in the degradation of misfolded proteins. The sequence is that of ATP-dependent Clp protease proteolytic subunit from Desulforamulus reducens (strain ATCC BAA-1160 / DSM 100696 / MI-1) (Desulfotomaculum reducens).